We begin with the raw amino-acid sequence, 50 residues long: Protein PndA (50 aa).

The helical transmembrane segment at Thr5–Arg25 threads the bilayer.

It belongs to the Hok/Gef family.

Its subcellular location is the cell inner membrane. Functionally, toxic component of a type I toxin-antitoxin (TA) system. When expressed is involved in cellular Mg(2+) release and degradation of stable RNA. The sequence is that of Protein PndA (pndA) from Escherichia coli.